A 327-amino-acid chain; its full sequence is dTDP-4-dehydrorhamnose reductase (327 aa).

Positions 1–22 are disordered; it reads MDLINGMGTSPGYWRTPREPGN. Residues 43–45, 69–70, and 91–93 each bind NADH; these read GMV, DI, and AYT. Residues 44-45, 69-70, and 91-93 contribute to the NADPH site; these read MV, DI, and AYT. Residue 132 to 133 participates in dTDP-beta-L-rhamnose binding; the sequence is TD. The NADH site is built by tyrosine 157 and lysine 161. Tyrosine 157 and lysine 161 together coordinate NADPH. The active-site Proton donor/acceptor is tyrosine 157. Tryptophan 182 is a dTDP-beta-L-rhamnose binding site. Positions 264 to 276 are enriched in basic and acidic residues; the sequence is PERVRPCGSDRHP. The interval 264 to 292 is disordered; sequence PERVRPCGSDRHPRPAPRPSYTVLSSQRS.

This sequence belongs to the dTDP-4-dehydrorhamnose reductase family. Mg(2+) serves as cofactor.

The catalysed reaction is dTDP-beta-L-rhamnose + NADP(+) = dTDP-4-dehydro-beta-L-rhamnose + NADPH + H(+). Its pathway is carbohydrate biosynthesis; dTDP-L-rhamnose biosynthesis. In terms of biological role, involved in the biosynthesis of the dTDP-L-rhamnose which is a component of the critical linker, D-N-acetylglucosamine-L-rhamnose disaccharide, which connects the galactan region of arabinogalactan to peptidoglycan via a phosphodiester linkage. Catalyzes the reduction of dTDP-6-deoxy-L-lyxo-4-hexulose to yield dTDP-L-rhamnose. In Mycolicibacterium smegmatis (strain ATCC 700084 / mc(2)155) (Mycobacterium smegmatis), this protein is dTDP-4-dehydrorhamnose reductase.